A 293-amino-acid polypeptide reads, in one-letter code: 4-hydroxy-tetrahydrodipicolinate synthase (293 aa).

Residue Thr-46 coordinates pyruvate. Tyr-133 (proton donor/acceptor) is an active-site residue. Residue Lys-161 is the Schiff-base intermediate with substrate of the active site. Val-202 is a pyruvate binding site.

The protein belongs to the DapA family. Homotetramer; dimer of dimers.

The protein resides in the cytoplasm. The catalysed reaction is L-aspartate 4-semialdehyde + pyruvate = (2S,4S)-4-hydroxy-2,3,4,5-tetrahydrodipicolinate + H2O + H(+). The protein operates within amino-acid biosynthesis; L-lysine biosynthesis via DAP pathway; (S)-tetrahydrodipicolinate from L-aspartate: step 3/4. In terms of biological role, catalyzes the condensation of (S)-aspartate-beta-semialdehyde [(S)-ASA] and pyruvate to 4-hydroxy-tetrahydrodipicolinate (HTPA). This Wolbachia pipientis wMel protein is 4-hydroxy-tetrahydrodipicolinate synthase.